The following is a 215-amino-acid chain: Ribonuclease T (215 aa).

In terms of domain architecture, Exonuclease spans Val-20–Phe-194. Mg(2+) contacts are provided by Asp-23, Glu-25, His-181, and Asp-186. His-181 acts as the Proton donor/acceptor in catalysis.

This sequence belongs to the RNase T family. Homodimer. The cofactor is Mg(2+).

Trims short 3' overhangs of a variety of RNA species, leaving a one or two nucleotide 3' overhang. Responsible for the end-turnover of tRNA: specifically removes the terminal AMP residue from uncharged tRNA (tRNA-C-C-A). Also appears to be involved in tRNA biosynthesis. In Yersinia pestis, this protein is Ribonuclease T.